The sequence spans 141 residues: MRHGVAGRKLGVTSSHRAAMFRNMAVALIKHEQITTTLPKAKELRPVVEKLITLGKRGDLHARRQAYAQLRDDVIVSKLFSAVADRYKARNGGYIRVLKAGIRHGDAADMAVIELVDRDVAAKGQDSGPRPEAAAEDSLAA.

The protein belongs to the bacterial ribosomal protein bL17 family. As to quaternary structure, part of the 50S ribosomal subunit. Contacts protein L32.

The protein is Large ribosomal subunit protein bL17 of Gluconacetobacter diazotrophicus (strain ATCC 49037 / DSM 5601 / CCUG 37298 / CIP 103539 / LMG 7603 / PAl5).